A 332-amino-acid chain; its full sequence is Holliday junction branch migration complex subunit RuvB (332 aa).

Residues 1–181 (MERIISELEM…FGVSHKMEYY (181 aa)) are large ATPase domain (RuvB-L). Residues L20, R21, G62, K65, T66, T67, R171, Y181, and R218 each contribute to the ATP site. Position 66 (T66) interacts with Mg(2+). Positions 182–252 (NENEIKSIII…SAKNALDMLG (71 aa)) are small ATPAse domain (RuvB-S). The head domain (RuvB-H) stretch occupies residues 255–332 (SNGLDDLDRN…QHFKKVEVKI (78 aa)). DNA contacts are provided by R291, R310, and R315.

It belongs to the RuvB family. As to quaternary structure, homohexamer. Forms an RuvA(8)-RuvB(12)-Holliday junction (HJ) complex. HJ DNA is sandwiched between 2 RuvA tetramers; dsDNA enters through RuvA and exits via RuvB. An RuvB hexamer assembles on each DNA strand where it exits the tetramer. Each RuvB hexamer is contacted by two RuvA subunits (via domain III) on 2 adjacent RuvB subunits; this complex drives branch migration. In the full resolvosome a probable DNA-RuvA(4)-RuvB(12)-RuvC(2) complex forms which resolves the HJ.

The protein resides in the cytoplasm. The enzyme catalyses ATP + H2O = ADP + phosphate + H(+). In terms of biological role, the RuvA-RuvB-RuvC complex processes Holliday junction (HJ) DNA during genetic recombination and DNA repair, while the RuvA-RuvB complex plays an important role in the rescue of blocked DNA replication forks via replication fork reversal (RFR). RuvA specifically binds to HJ cruciform DNA, conferring on it an open structure. The RuvB hexamer acts as an ATP-dependent pump, pulling dsDNA into and through the RuvAB complex. RuvB forms 2 homohexamers on either side of HJ DNA bound by 1 or 2 RuvA tetramers; 4 subunits per hexamer contact DNA at a time. Coordinated motions by a converter formed by DNA-disengaged RuvB subunits stimulates ATP hydrolysis and nucleotide exchange. Immobilization of the converter enables RuvB to convert the ATP-contained energy into a lever motion, pulling 2 nucleotides of DNA out of the RuvA tetramer per ATP hydrolyzed, thus driving DNA branch migration. The RuvB motors rotate together with the DNA substrate, which together with the progressing nucleotide cycle form the mechanistic basis for DNA recombination by continuous HJ branch migration. Branch migration allows RuvC to scan DNA until it finds its consensus sequence, where it cleaves and resolves cruciform DNA. The protein is Holliday junction branch migration complex subunit RuvB of Fusobacterium nucleatum subsp. nucleatum (strain ATCC 25586 / DSM 15643 / BCRC 10681 / CIP 101130 / JCM 8532 / KCTC 2640 / LMG 13131 / VPI 4355).